Reading from the N-terminus, the 223-residue chain is MSAESGVAALLRLMAWLSPAFPVGGFSYSGGLEKAVEDGRVCDAAGLGGWVETLLRHGSLWNDAVFLAHAWRSSQDTTALSETANLGRALAGSAERYRETVLLGDAFIAAASAWPHAVLELLPKEAPYPVAIGAVAAGHGVPLRETLAAFLHAGVSQIVSAGIRLGVAGQKDGVAILAASEAVIEEIAARAALSTLDDLGSATVIADTAAMRHETQGTRLFRS.

It belongs to the UreF family. UreD, UreF and UreG form a complex that acts as a GTP-hydrolysis-dependent molecular chaperone, activating the urease apoprotein by helping to assemble the nickel containing metallocenter of UreC. The UreE protein probably delivers the nickel.

It is found in the cytoplasm. Required for maturation of urease via the functional incorporation of the urease nickel metallocenter. The sequence is that of Urease accessory protein UreF from Agrobacterium fabrum (strain C58 / ATCC 33970) (Agrobacterium tumefaciens (strain C58)).